The chain runs to 332 residues: UDP-3-O-acylglucosamine N-acyltransferase (332 aa).

Catalysis depends on His-231, which acts as the Proton acceptor.

This sequence belongs to the transferase hexapeptide repeat family. LpxD subfamily. Homotrimer.

The catalysed reaction is a UDP-3-O-[(3R)-3-hydroxyacyl]-alpha-D-glucosamine + a (3R)-hydroxyacyl-[ACP] = a UDP-2-N,3-O-bis[(3R)-3-hydroxyacyl]-alpha-D-glucosamine + holo-[ACP] + H(+). The protein operates within bacterial outer membrane biogenesis; LPS lipid A biosynthesis. In terms of biological role, catalyzes the N-acylation of UDP-3-O-acylglucosamine using 3-hydroxyacyl-ACP as the acyl donor. Is involved in the biosynthesis of lipid A, a phosphorylated glycolipid that anchors the lipopolysaccharide to the outer membrane of the cell. This is UDP-3-O-acylglucosamine N-acyltransferase from Vesicomyosocius okutanii subsp. Calyptogena okutanii (strain HA).